A 438-amino-acid polypeptide reads, in one-letter code: Na(+)/H(+) antiporter NhaA (438 aa).

The next 11 helical transmembrane spans lie at phenylalanine 23–leucine 43, phenylalanine 62–leucine 82, serine 104–leucine 124, glycine 133–glycine 153, valine 162–phenylalanine 182, threonine 185–leucine 205, valine 221–leucine 241, phenylalanine 302–valine 322, phenylalanine 337–isoleucine 357, tryptophan 372–isoleucine 392, and isoleucine 410–leucine 430.

The protein belongs to the NhaA Na(+)/H(+) (TC 2.A.33) antiporter family.

It localises to the cell inner membrane. The enzyme catalyses Na(+)(in) + 2 H(+)(out) = Na(+)(out) + 2 H(+)(in). In terms of biological role, na(+)/H(+) antiporter that extrudes sodium in exchange for external protons. This Helicobacter pylori (strain P12) protein is Na(+)/H(+) antiporter NhaA.